Reading from the N-terminus, the 330-residue chain is Putative [LysW]-L-2-aminoadipate/[LysW]-L-glutamate phosphate reductase (330 aa).

10–13 contributes to the NADP(+) binding site; the sequence is SGYI. Residue Cys-142 is part of the active site. Residue Asn-297 participates in NADP(+) binding.

This sequence belongs to the NAGSA dehydrogenase family. Type 1 subfamily. LysY sub-subfamily.

Its subcellular location is the cytoplasm. The enzyme catalyses [amino-group carrier protein]-C-terminal-N-(1-carboxy-5-oxopentan-1-yl)-L-glutamine + phosphate + NADP(+) = [amino-group carrier protein]-C-terminal-N-(1-carboxy-5-phosphooxy-5-oxopentan-1-yl)-L-glutamine + NADPH + H(+). The catalysed reaction is [amino-group carrier protein]-C-terminal-gamma-(L-glutamyl-5-semialdehyde)-L-glutamate + phosphate + NADP(+) = [amino-group carrier protein]-C-terminal-gamma-(5-phospho-L-glutamyl)-L-glutamate + NADPH + H(+). Its pathway is amino-acid biosynthesis; L-lysine biosynthesis via AAA pathway; L-lysine from L-alpha-aminoadipate (Thermus route): step 3/5. The protein operates within amino-acid biosynthesis; L-arginine biosynthesis. Its function is as follows. Involved in both the arginine and lysine biosynthetic pathways. The sequence is that of Putative [LysW]-L-2-aminoadipate/[LysW]-L-glutamate phosphate reductase from Pyrococcus horikoshii (strain ATCC 700860 / DSM 12428 / JCM 9974 / NBRC 100139 / OT-3).